A 44-amino-acid polypeptide reads, in one-letter code: MKSKWMSGLLLVAVGFSFTQVMVHAGETANTEGKTFHIAARNQT.

A propeptide spanning residues 1-39 (MKSKWMSGLLLVAVGFSFTQVMVHAGETANTEGKTFHIA) is cleaved from the precursor.

It belongs to the Phr family. In terms of assembly, interacts with RapA and inhibits its interaction with Spo0F. Secreted with a propeptide domain, which is cleaved in the cell wall by the secreted serine proteases subtilisin and Vpr to produce a mature signaling peptide. Contains a predicted signal peptide cleavage site in the N-terminal region, however the propeptide is probably subject to only one processing event, at the N-terminal end of the mature peptide.

The protein localises to the secreted. It is found in the cytoplasm. With respect to regulation, inhibition of RapA requires a free carboxylate group at the C-terminal end of the PhrA pentapeptide. A free C-terminal carboxylic acid PhrA pentapeptide inhibits RapA phosphatase activity at a 1:1 ratio and is approximately 200 fold more active than a C-terminal amide peptide. In terms of biological role, signaling molecule involved in the regulation of sporulation. Secreted during production, but the mature peptide acts intracellularly, indicating that it needs to be imported into the cell to function. Inhibitor of the RapA phosphatase activity. Does not act on RapB. The polypeptide is Phosphatase RapA inhibitor (Bacillus subtilis (strain 168)).